The sequence spans 396 residues: Acetyl-CoA acetyltransferase (396 aa).

Residue C88 is the Acyl-thioester intermediate of the active site. Active-site proton acceptor residues include H352 and C382.

Belongs to the thiolase-like superfamily. Thiolase family. In terms of assembly, homotetramer.

The catalysed reaction is 2 acetyl-CoA = acetoacetyl-CoA + CoA. The protein operates within biopolymer metabolism; poly-(R)-3-hydroxybutanoate biosynthesis. When expressed in E.coli with Synechocystis PhaB, PhaC and PhaE confers the ability to synthesize up to 12% (w/w) poly(3-hydroxybutyrate) (PHB) depending on the carbon source. The protein is Acetyl-CoA acetyltransferase of Synechocystis sp. (strain ATCC 27184 / PCC 6803 / Kazusa).